Consider the following 499-residue polypeptide: Na(+)/H(+) antiporter NhaB (499 aa).

11 helical membrane-spanning segments follow: residues 33–53, 66–86, 89–109, 128–148, 237–257, 305–325, 326–346, 349–369, 393–413, 449–469, and 477–497; these read PVIFLISPYIAGWVLILEFIF, PGGLLAIEAVLIGMVSPHTVY, VSGNLEVILLLVFMVAGIYFM, AILSLLFSLVAAVLSAFLDAL, FIEFFVRMAPISIPVLIAGLI, AIVALILVVALALHLAEVGLI, GLTVIILATAFCGVIEEHQIG, FEEALPFTSLLVVFFAVVGVI, MFFIANGVLSMISDNVFVATV, ATPNGQAAFLFLLTSAIAPLI, and VWMALPYTLVMGGLGYVMIVI.

This sequence belongs to the NhaB Na(+)/H(+) (TC 2.A.34) antiporter family.

It localises to the cell inner membrane. The catalysed reaction is 2 Na(+)(in) + 3 H(+)(out) = 2 Na(+)(out) + 3 H(+)(in). Na(+)/H(+) antiporter that extrudes sodium in exchange for external protons. This chain is Na(+)/H(+) antiporter NhaB, found in Hahella chejuensis (strain KCTC 2396).